The primary structure comprises 178 residues: Cytochrome b6-f complex iron-sulfur subunit (178 aa).

A helical membrane pass occupies residues 20–42 (LLTFGTATGVALGALYPVANFFM). The Rieske domain maps to 71–161 (NHPAGDRSLV…IDIDDDNVLV (91 aa)). [2Fe-2S] cluster is bound by residues Cys-107, His-109, Cys-125, and His-128. Cys-112 and Cys-127 are joined by a disulfide.

This sequence belongs to the Rieske iron-sulfur protein family. As to quaternary structure, the 4 large subunits of the cytochrome b6-f complex are cytochrome b6, subunit IV (17 kDa polypeptide, PetD), cytochrome f and the Rieske protein, while the 4 small subunits are PetG, PetL, PetM and PetN. The complex functions as a dimer. The cofactor is [2Fe-2S] cluster.

It is found in the cellular thylakoid membrane. It carries out the reaction 2 oxidized [plastocyanin] + a plastoquinol + 2 H(+)(in) = 2 reduced [plastocyanin] + a plastoquinone + 4 H(+)(out). Component of the cytochrome b6-f complex, which mediates electron transfer between photosystem II (PSII) and photosystem I (PSI), cyclic electron flow around PSI, and state transitions. This Prochlorococcus marinus (strain SARG / CCMP1375 / SS120) protein is Cytochrome b6-f complex iron-sulfur subunit.